The sequence spans 147 residues: D-aminoacyl-tRNA deacylase (147 aa).

Positions 136–137 (GP) match the Gly-cisPro motif, important for rejection of L-amino acids motif.

Belongs to the DTD family. In terms of assembly, homodimer.

The protein resides in the cytoplasm. It carries out the reaction glycyl-tRNA(Ala) + H2O = tRNA(Ala) + glycine + H(+). The catalysed reaction is a D-aminoacyl-tRNA + H2O = a tRNA + a D-alpha-amino acid + H(+). Functionally, an aminoacyl-tRNA editing enzyme that deacylates mischarged D-aminoacyl-tRNAs. Also deacylates mischarged glycyl-tRNA(Ala), protecting cells against glycine mischarging by AlaRS. Acts via tRNA-based rather than protein-based catalysis; rejects L-amino acids rather than detecting D-amino acids in the active site. By recycling D-aminoacyl-tRNA to D-amino acids and free tRNA molecules, this enzyme counteracts the toxicity associated with the formation of D-aminoacyl-tRNA entities in vivo and helps enforce protein L-homochirality. The polypeptide is D-aminoacyl-tRNA deacylase (Nitratiruptor sp. (strain SB155-2)).